Reading from the N-terminus, the 213-residue chain is Ribosomal RNA large subunit methyltransferase E (213 aa).

S-adenosyl-L-methionine-binding residues include Gly-59, Phe-61, Asp-79, Asp-97, and Asp-121. Catalysis depends on Lys-161, which acts as the Proton acceptor.

The protein belongs to the class I-like SAM-binding methyltransferase superfamily. RNA methyltransferase RlmE family.

It is found in the cytoplasm. The catalysed reaction is uridine(2552) in 23S rRNA + S-adenosyl-L-methionine = 2'-O-methyluridine(2552) in 23S rRNA + S-adenosyl-L-homocysteine + H(+). Functionally, specifically methylates the uridine in position 2552 of 23S rRNA at the 2'-O position of the ribose in the fully assembled 50S ribosomal subunit. This is Ribosomal RNA large subunit methyltransferase E from Myxococcus xanthus (strain DK1622).